Reading from the N-terminus, the 222-residue chain is ER membrane protein complex subunit 7 homolog (222 aa).

The first 16 residues, 1 to 16 (MKSILLLFSLIVLGSA), serve as a signal peptide directing secretion. Residues 17-145 (TEEVSRTEQT…RKREEWRITD (129 aa)) lie on the Extracellular side of the membrane. Residues 146 to 166 (MLFSPMVLMLVVPLVVMLILP) form a helical membrane-spanning segment. Residues 167–222 (KMTANDPELKKEMENMQMPKVDMPDVGEMMANFFGGSAPAKKKAVTGGSGSGQRRK) lie on the Cytoplasmic side of the membrane.

Belongs to the EMC7 family.

It localises to the membrane. This Caenorhabditis elegans protein is ER membrane protein complex subunit 7 homolog.